A 177-amino-acid chain; its full sequence is Large ribosomal subunit protein uL6 (177 aa).

It belongs to the universal ribosomal protein uL6 family. As to quaternary structure, part of the 50S ribosomal subunit.

This protein binds to the 23S rRNA, and is important in its secondary structure. It is located near the subunit interface in the base of the L7/L12 stalk, and near the tRNA binding site of the peptidyltransferase center. The sequence is that of Large ribosomal subunit protein uL6 from Citrobacter koseri (strain ATCC BAA-895 / CDC 4225-83 / SGSC4696).